A 256-amino-acid chain; its full sequence is ATG8-interacting protein 1 (256 aa).

The AIM (Atg8-family-interacting motif) signature appears at 14–17 (WEVV). A helical membrane pass occupies residues 181–200 (ANAIWSLFFAAAVTGLVVLG). The AIM (Atg8-family-interacting motif) motif lies at 208–211 (WQVL).

As to quaternary structure, interacts with ATG8F. Interacts with ATG8H. Interacts with APE1 and PSBS/NPQ4.

The protein localises to the endoplasmic reticulum membrane. Its subcellular location is the membrane. It localises to the plastid. It is found in the chloroplast membrane. Functionally, involved in a special stress-induced plastid-to-vacuole protein trafficking pathway. Interacts with ATG8F in plastid bodies to subsequently enable their delivery to the vacuole by an autophagic pathway. Interacts with the plastid proteins APE1 and PSBS/NPQ4 and may recruit them as cargo into plastid bodies that may be recognized by the autophagy machinery for degradation in the vacuole. Involved in the alleviation of damage caused by salt stress during plant development, probably through its involvement in plastid-to-vacuole and ER-to-vacuole trafficking. Plays a role in seed germination in response to exogenous abscisic acid (ABA) treatment. The chain is ATG8-interacting protein 1 from Arabidopsis thaliana (Mouse-ear cress).